A 92-amino-acid polypeptide reads, in one-letter code: Signal recognition particle 19 kDa protein (92 aa).

It belongs to the SRP19 family. As to quaternary structure, part of the signal recognition particle protein translocation system, which is composed of SRP and FtsY. Archaeal SRP consists of a 7S RNA molecule of 300 nucleotides and two protein subunits: SRP54 and SRP19.

Its subcellular location is the cytoplasm. Involved in targeting and insertion of nascent membrane proteins into the cytoplasmic membrane. Binds directly to 7S RNA and mediates binding of the 54 kDa subunit of the SRP. In Haloferax volcanii (strain ATCC 29605 / DSM 3757 / JCM 8879 / NBRC 14742 / NCIMB 2012 / VKM B-1768 / DS2) (Halobacterium volcanii), this protein is Signal recognition particle 19 kDa protein.